The following is a 325-amino-acid chain: Holliday junction branch migration complex subunit RuvB (325 aa).

The interval 1 to 180 is large ATPase domain (RuvB-L); it reads MKNQLLDAKV…FGIHLKLNFY (180 aa). ATP is bound by residues Leu-19, Arg-20, Gly-61, Lys-64, Thr-65, Ser-66, 127 to 129, Arg-170, Tyr-180, and Arg-217; that span reads EDF. Mg(2+) is bound at residue Thr-65. Positions 181–251 are small ATPAse domain (RuvB-S); sequence SCEELTQIVE…ITDYALNQLG (71 aa). A head domain (RuvB-H) region spans residues 254 to 325; sequence KLGLDSSDHK…ITANALKHLH (72 aa). Residues Arg-290, Arg-309, and Arg-314 each contribute to the DNA site.

It belongs to the RuvB family. In terms of assembly, homohexamer. Forms an RuvA(8)-RuvB(12)-Holliday junction (HJ) complex. HJ DNA is sandwiched between 2 RuvA tetramers; dsDNA enters through RuvA and exits via RuvB. An RuvB hexamer assembles on each DNA strand where it exits the tetramer. Each RuvB hexamer is contacted by two RuvA subunits (via domain III) on 2 adjacent RuvB subunits; this complex drives branch migration. In the full resolvosome a probable DNA-RuvA(4)-RuvB(12)-RuvC(2) complex forms which resolves the HJ.

It is found in the cytoplasm. The catalysed reaction is ATP + H2O = ADP + phosphate + H(+). The RuvA-RuvB-RuvC complex processes Holliday junction (HJ) DNA during genetic recombination and DNA repair, while the RuvA-RuvB complex plays an important role in the rescue of blocked DNA replication forks via replication fork reversal (RFR). RuvA specifically binds to HJ cruciform DNA, conferring on it an open structure. The RuvB hexamer acts as an ATP-dependent pump, pulling dsDNA into and through the RuvAB complex. RuvB forms 2 homohexamers on either side of HJ DNA bound by 1 or 2 RuvA tetramers; 4 subunits per hexamer contact DNA at a time. Coordinated motions by a converter formed by DNA-disengaged RuvB subunits stimulates ATP hydrolysis and nucleotide exchange. Immobilization of the converter enables RuvB to convert the ATP-contained energy into a lever motion, pulling 2 nucleotides of DNA out of the RuvA tetramer per ATP hydrolyzed, thus driving DNA branch migration. The RuvB motors rotate together with the DNA substrate, which together with the progressing nucleotide cycle form the mechanistic basis for DNA recombination by continuous HJ branch migration. Branch migration allows RuvC to scan DNA until it finds its consensus sequence, where it cleaves and resolves cruciform DNA. This is Holliday junction branch migration complex subunit RuvB from Orientia tsutsugamushi (strain Boryong) (Rickettsia tsutsugamushi).